Reading from the N-terminus, the 188-residue chain is Elongation factor P (188 aa).

Belongs to the elongation factor P family.

It localises to the cytoplasm. The protein operates within protein biosynthesis; polypeptide chain elongation. Functionally, involved in peptide bond synthesis. Stimulates efficient translation and peptide-bond synthesis on native or reconstituted 70S ribosomes in vitro. Probably functions indirectly by altering the affinity of the ribosome for aminoacyl-tRNA, thus increasing their reactivity as acceptors for peptidyl transferase. This Leptospira interrogans serogroup Icterohaemorrhagiae serovar copenhageni (strain Fiocruz L1-130) protein is Elongation factor P.